The chain runs to 91 residues: Probable Fe(2+)-trafficking protein (91 aa).

The protein belongs to the Fe(2+)-trafficking protein family. In terms of assembly, monomer.

Functionally, could be a mediator in iron transactions between iron acquisition and iron-requiring processes, such as synthesis and/or repair of Fe-S clusters in biosynthetic enzymes. This is Probable Fe(2+)-trafficking protein from Cronobacter sakazakii (strain ATCC BAA-894) (Enterobacter sakazakii).